The sequence spans 207 residues: Small ribosomal subunit protein uS4 (207 aa).

Positions 31 to 55 (KCKLDSKPGQHGRTSGARTSDYGTQ) are disordered. Positions 42-53 (GRTSGARTSDYG) are enriched in polar residues. An S4 RNA-binding domain is found at 97-160 (SRLDNVVYRM…KKQARIVEAL (64 aa)).

The protein belongs to the universal ribosomal protein uS4 family. Part of the 30S ribosomal subunit. Contacts protein S5. The interaction surface between S4 and S5 is involved in control of translational fidelity.

One of the primary rRNA binding proteins, it binds directly to 16S rRNA where it nucleates assembly of the body of the 30S subunit. Its function is as follows. With S5 and S12 plays an important role in translational accuracy. This Burkholderia lata (strain ATCC 17760 / DSM 23089 / LMG 22485 / NCIMB 9086 / R18194 / 383) protein is Small ribosomal subunit protein uS4.